We begin with the raw amino-acid sequence, 389 residues long: MSVTATSHDILKSIDDSILPPEDTLSEAMYNNVKLDHYFNKLPKSSEENNINDQTNQLIVSAAPESEDSPAAEWKLLRTLAGAHQGWIRAIALDEITNKWYVTGSADSTIKIWDFENNSLKAVLTGHVLGIRSLCISKRHPYLFSGGEDKSLRCWDLERSNSDAGCQIRSYHGHLGGVYSIGLHPELDVLFSGGKDCVVRVWDIRSRVEAMTLLGHTNDITSIETDYNDPQVITSSMDGTIRLWDLRKSKTELLITNHSKSIRSMKSHPKEATFVSGDSNGEIKQWLLPKGELLNEFGTSQLSPNQRDNSRIINTLAINPVTNTLFSGYDDGKLEFYNYTTGNLQQSGQSPSLAGPEQSAIYASTFDMSGLRLLTCHGDKSIRIWGTSY.

7 WD repeats span residues 83-123, 126-165, 173-212, 215-254, 257-298, 308-347, and 356-389; these read AHQG…LKAV, GHVLGIRSLCISKRHPYLFSGGEDKSLRCWDLERSNSDAG, GHLGGVYSIGLHPELDVLFSGGKDCVVRVWDIRSRVEAMT, GHTNDITSIETDYNDPQVITSSMDGTIRLWDLRKSKTELL, NHSK…NEFG, DNSRIINTLAINPVTNTLFSGYDDGKLEFYNYTTGNLQQS, and PEQSAIYASTFDMSGLRLLTCHGDKSIRIWGTSY.

This sequence belongs to the WD repeat PRL1/PRL2 family. Associated with the spliceosome.

The protein localises to the cytoplasm. The protein resides in the nucleus. Its function is as follows. Involved in pre-mRNA splicing and required for cell cycle progression at G2/M. In Candida albicans (strain SC5314 / ATCC MYA-2876) (Yeast), this protein is Pre-mRNA-splicing factor PRP46 (PRP46).